The sequence spans 270 residues: Chromo domain-containing protein cec-4 (270 aa).

Disordered stretches follow at residues methionine 1–lysine 24 and lysine 143–valine 229. In terms of domain architecture, Chromo spans tyrosine 87 to threonine 147. Basic residues-rich tracts occupy residues threonine 151 to alanine 167 and threonine 187 to arginine 197. Over residues leucine 205–valine 229 the composition is skewed to basic and acidic residues.

As to quaternary structure, interacts with mono-, di- and tri-methylated 'Lys-9' residues on histone H3. Weakly interacts with methylated 'Lys-37' residues on histone H3.

The protein localises to the nucleus inner membrane. The protein resides in the membrane. Its function is as follows. Chromatin anchor protein which binds to methylated lysine residues on histone H3, thereby recruiting heterochromatin to the nuclear periphery, especially in embryonic cells, with a lesser role in differentiated cells. May be required for the correct positioning of chromatin and nucleoli in embryos. This Caenorhabditis elegans protein is Chromo domain-containing protein cec-4.